A 1148-amino-acid polypeptide reads, in one-letter code: Ice nucleation protein (1148 aa).

Disordered stretches follow at residues 110 to 131 (ADPA…PTAI), 222 to 256 (YGST…GYGS), and 367 to 394 (GSTQ…GSNL). A compositionally biased stretch (low complexity) spans 114–128 (STSTSTSTSTLTPMP). The interval 180-1099 (ATYGSTLSGD…LSAGEDSTLI (920 aa)) is octapeptide periodicity. A compositionally biased stretch (polar residues) spans 230–250 (EDSSLTAGYGSTQTAQEGSNL).

It belongs to the bacterial ice nucleation protein family.

The protein resides in the cell outer membrane. Ice nucleation proteins enable bacteria to nucleate crystallization in supercooled water. The protein is Ice nucleation protein (inaK) of Pseudomonas syringae.